We begin with the raw amino-acid sequence, 291 residues long: Small ribosomal subunit protein uS2 (291 aa).

Positions 241–270 (KREPRQINRPVMSSENQAEQQTSVANENVQ) are disordered. Polar residues predominate over residues 251 to 270 (VMSSENQAEQQTSVANENVQ).

Belongs to the universal ribosomal protein uS2 family.

The protein is Small ribosomal subunit protein uS2 of Mycoplasma capricolum subsp. capricolum (strain California kid / ATCC 27343 / NCTC 10154).